Consider the following 118-residue polypeptide: Small ribosomal subunit protein uS13 (118 aa).

The interval 93 to 118 is disordered; the sequence is RGLPVRGQRTKTNARTRKGPRKPIRK.

It belongs to the universal ribosomal protein uS13 family. In terms of assembly, part of the 30S ribosomal subunit. Forms a loose heterodimer with protein S19. Forms two bridges to the 50S subunit in the 70S ribosome.

Its function is as follows. Located at the top of the head of the 30S subunit, it contacts several helices of the 16S rRNA. In the 70S ribosome it contacts the 23S rRNA (bridge B1a) and protein L5 of the 50S subunit (bridge B1b), connecting the 2 subunits; these bridges are implicated in subunit movement. Contacts the tRNAs in the A and P-sites. This Azotobacter vinelandii (strain DJ / ATCC BAA-1303) protein is Small ribosomal subunit protein uS13.